The chain runs to 198 residues: Peroxiredoxin-2F, mitochondrial (198 aa).

Residues 1–27 (MASALLRKATVGGSAAAAAARWASRGL) constitute a mitochondrion transit peptide. Residues 34 to 198 (SDIVSAAPGV…SGAEVILDQI (165 aa)) form the Thioredoxin domain. Cys86 functions as the Cysteine sulfenic acid (-SOH) intermediate in the catalytic mechanism.

This sequence belongs to the peroxiredoxin family. Prx5 subfamily. In terms of assembly, monomer.

It localises to the mitochondrion matrix. The enzyme catalyses [glutaredoxin]-dithiol + a hydroperoxide = [glutaredoxin]-disulfide + an alcohol + H2O. Thiol-specific peroxidase that catalyzes the reduction of hydrogen peroxide and organic hydroperoxides to water and alcohols, respectively. Plays a role in cell protection against oxidative stress by detoxifying peroxides. Reduces preferentially hydrogen peroxide rather than alkyl peroxides. May be involved in mitochondrial redox homeostasis. The chain is Peroxiredoxin-2F, mitochondrial (PRXIIF) from Oryza sativa subsp. japonica (Rice).